We begin with the raw amino-acid sequence, 477 residues long: Dihydrolipoyl dehydrogenase (477 aa).

FAD is bound by residues 41-50 (EKRGALGGTC), K59, G124, and 153-155 (TGS). Cysteines 50 and 55 form a disulfide. Residues 190–197 (GGGVIGLE), E213, V248, and G282 contribute to the NAD(+) site. Residues D323 and 330-333 (MLAH) each bind FAD. H456 functions as the Proton acceptor in the catalytic mechanism.

It belongs to the class-I pyridine nucleotide-disulfide oxidoreductase family. Homodimer. It depends on FAD as a cofactor.

It catalyses the reaction N(6)-[(R)-dihydrolipoyl]-L-lysyl-[protein] + NAD(+) = N(6)-[(R)-lipoyl]-L-lysyl-[protein] + NADH + H(+). The polypeptide is Dihydrolipoyl dehydrogenase (LPD) (Trypanosoma cruzi).